A 521-amino-acid chain; its full sequence is 56 kDa type-specific antigen (521 aa).

Positions 1–22 (MRKIMLIASAMSALSLPFSANA) are cleaved as a signal peptide. A helical membrane pass occupies residues 64–86 (LPLIKGMPFGVTLAAGMTITPGV). The disordered stretch occupies residues 386–415 (LGVDQGQEGGCSKDKKQSDTTAEESKKEGK). The span at 396-415 (CSKDKKQSDTTAEESKKEGK) shows a compositional bias: basic and acidic residues. The chain crosses the membrane as a helical span at residues 469 to 484 (TGMVGSLALGVAANVA).

It is found in the cell membrane. Functionally, may be an adherent factor for rickettsial adsorption to the host-cell surface and a determinant of virulence of individual rickettsial strain. It is the major outer membrane protein. In Orientia tsutsugamushi (Rickettsia tsutsugamushi), this protein is 56 kDa type-specific antigen.